The chain runs to 138 residues: ATP synthase epsilon chain (138 aa).

It belongs to the ATPase epsilon chain family. As to quaternary structure, F-type ATPases have 2 components, CF(1) - the catalytic core - and CF(0) - the membrane proton channel. CF(1) has five subunits: alpha(3), beta(3), gamma(1), delta(1), epsilon(1). CF(0) has three main subunits: a, b and c.

The protein resides in the cell inner membrane. Produces ATP from ADP in the presence of a proton gradient across the membrane. The protein is ATP synthase epsilon chain of Geotalea uraniireducens (strain Rf4) (Geobacter uraniireducens).